Reading from the N-terminus, the 652-residue chain is Putative enzymatic polyprotein (652 aa).

The Peptidase A2 domain maps to 21–99 (YHGLFDTGAN…SPDIIIGATF (79 aa)). Aspartate 26 is a catalytic residue. The 183-residue stretch at 231–413 (FIEEKTNFED…EKIDFLGVQI (183 aa)) folds into the Reverse transcriptase domain. Residues aspartate 301, aspartate 364, and aspartate 365 each contribute to the Mg(2+) site.

It carries out the reaction DNA(n) + a 2'-deoxyribonucleoside 5'-triphosphate = DNA(n+1) + diphosphate. The catalysed reaction is Endonucleolytic cleavage to 5'-phosphomonoester.. Functionally, encodes for at least two polypeptides: protease (PR) and reverse transcriptase (RT). The protease processes the polyprotein in cis. Reverse transcriptase is multifunctional enzyme that converts the viral RNA genome into dsDNA in viral cytoplasmic capsids. This enzyme displays a DNA polymerase activity that can copy either DNA or RNA templates, and a ribonuclease H (RNase H) activity that cleaves the RNA strand of RNA-DNA heteroduplexes in a partially processive 3'- to 5'-endonucleasic mode. Neo-synthesized pregenomic RNA (pgRNA) are encapsidated, and reverse-transcribed inside the nucleocapsid. Partial (+)DNA is synthesized from the (-)DNA template and generates the relaxed circular DNA (RC-DNA) genome. After budding and infection, the RC-DNA migrates in the nucleus, and is converted into a plasmid-like covalently closed circular DNA (cccDNA). The polypeptide is Putative enzymatic polyprotein (Cassava vein mosaic virus (CsVMV)).